The chain runs to 212 residues: Translation initiation factor IF-3 (212 aa).

Residues 168–212 (MAPKAPASPKKDKADRPEGDAGDTDMAAPAPAPAAAPETESAPSA) are disordered. Basic and acidic residues predominate over residues 176 to 186 (PKKDKADRPEG). Low complexity predominate over residues 194–212 (AAPAPAPAAAPETESAPSA).

Belongs to the IF-3 family. In terms of assembly, monomer.

The protein localises to the cytoplasm. Its function is as follows. IF-3 binds to the 30S ribosomal subunit and shifts the equilibrium between 70S ribosomes and their 50S and 30S subunits in favor of the free subunits, thus enhancing the availability of 30S subunits on which protein synthesis initiation begins. This is Translation initiation factor IF-3 from Deinococcus radiodurans (strain ATCC 13939 / DSM 20539 / JCM 16871 / CCUG 27074 / LMG 4051 / NBRC 15346 / NCIMB 9279 / VKM B-1422 / R1).